A 341-amino-acid chain; its full sequence is MQVADFDYHLPEERIAKYPPLERGSTRLLVLNRQSGALTHSLYAHLDTFLQAGDLLLLNNTRVVPARLFATRATGATIELMLLERHHHREQLVLYRGQLKAGEMLQSHGHTLLVEEVLPQGLARLALADGGDLHQFFTQFGSVPIPPYLKRNAEAVDRERYQTVFAAHSGSVAAPTASLNMTPELLQRLKNNGVEIAHITLHVGLGTFLPIRTESLEEHVMHRESYLLPAESVAALQRVKADGGRVVAVGTTVTRALEHSAPRILQSSAHAEIEGEADIFIYPGYRFQMVDLLLTNFHAPRSTVLMLTAACAGTDNLRAAYSEAVLQGYNFLSYGDSMLIC.

The protein belongs to the QueA family. In terms of assembly, monomer.

It is found in the cytoplasm. The enzyme catalyses 7-aminomethyl-7-carbaguanosine(34) in tRNA + S-adenosyl-L-methionine = epoxyqueuosine(34) in tRNA + adenine + L-methionine + 2 H(+). It functions in the pathway tRNA modification; tRNA-queuosine biosynthesis. Transfers and isomerizes the ribose moiety from AdoMet to the 7-aminomethyl group of 7-deazaguanine (preQ1-tRNA) to give epoxyqueuosine (oQ-tRNA). This is S-adenosylmethionine:tRNA ribosyltransferase-isomerase from Chlorobium chlorochromatii (strain CaD3).